The following is a 220-amino-acid chain: 7-cyano-7-deazaguanine synthase (220 aa).

7–17 provides a ligand contact to ATP; sequence LSGGMDSSITA. Cys185, Cys193, Cys196, and Cys199 together coordinate Zn(2+).

The protein belongs to the QueC family. It depends on Zn(2+) as a cofactor.

The catalysed reaction is 7-carboxy-7-deazaguanine + NH4(+) + ATP = 7-cyano-7-deazaguanine + ADP + phosphate + H2O + H(+). It participates in purine metabolism; 7-cyano-7-deazaguanine biosynthesis. Its function is as follows. Catalyzes the ATP-dependent conversion of 7-carboxy-7-deazaguanine (CDG) to 7-cyano-7-deazaguanine (preQ(0)). In Nitratiruptor sp. (strain SB155-2), this protein is 7-cyano-7-deazaguanine synthase.